A 105-amino-acid chain; its full sequence is MTTETIDGVRLTTKANVYFDGKCVSHSFALPDGTKKSVGVVLPATLTFGTAAAEIMECVGGSCEYRLDGSDEWKQSGPGERFQVPANSKFDIRVTEAYHYICHYA.

The protein belongs to the nucleoside phosphorylase PpnP family.

It carries out the reaction a purine D-ribonucleoside + phosphate = a purine nucleobase + alpha-D-ribose 1-phosphate. It catalyses the reaction adenosine + phosphate = alpha-D-ribose 1-phosphate + adenine. The enzyme catalyses cytidine + phosphate = cytosine + alpha-D-ribose 1-phosphate. The catalysed reaction is guanosine + phosphate = alpha-D-ribose 1-phosphate + guanine. It carries out the reaction inosine + phosphate = alpha-D-ribose 1-phosphate + hypoxanthine. It catalyses the reaction thymidine + phosphate = 2-deoxy-alpha-D-ribose 1-phosphate + thymine. The enzyme catalyses uridine + phosphate = alpha-D-ribose 1-phosphate + uracil. The catalysed reaction is xanthosine + phosphate = alpha-D-ribose 1-phosphate + xanthine. Functionally, catalyzes the phosphorolysis of diverse nucleosides, yielding D-ribose 1-phosphate and the respective free bases. Can use uridine, adenosine, guanosine, cytidine, thymidine, inosine and xanthosine as substrates. Also catalyzes the reverse reactions. The chain is Pyrimidine/purine nucleoside phosphorylase from Ralstonia nicotianae (strain ATCC BAA-1114 / GMI1000) (Ralstonia solanacearum).